The chain runs to 162 residues: Cytochrome c-type biogenesis protein CcmE (162 aa).

At 1 to 7 the chain is on the cytoplasmic side; that stretch reads MTRKQRR. Residues 8–28 traverse the membrane as a helical; Signal-anchor for type II membrane protein segment; the sequence is LTMIGGALVVLGIAAALVLNA. At 29 to 162 the chain is on the periplasmic side; the sequence is LRDSIVFFST…EASSKQEVSQ (134 aa). Heme is bound by residues H122 and Y126. The tract at residues 140–162 is disordered; it reads HWKDDYGAQPGAAEASSKQEVSQ.

Belongs to the CcmE/CycJ family.

It is found in the cell inner membrane. Functionally, heme chaperone required for the biogenesis of c-type cytochromes. Transiently binds heme delivered by CcmC and transfers the heme to apo-cytochromes in a process facilitated by CcmF and CcmH. This is Cytochrome c-type biogenesis protein CcmE from Nitrobacter winogradskyi (strain ATCC 25391 / DSM 10237 / CIP 104748 / NCIMB 11846 / Nb-255).